Here is a 126-residue protein sequence, read N- to C-terminus: Activated RNA polymerase II transcriptional coactivator p15 (126 aa).

The disordered stretch occupies residues 1-63; it reads MPKSKELVSS…QSSNRDENMF (63 aa). Residues 2 to 50 form a regulatory region; the sequence is PKSKELVSSSSSASDSDSEVDKKAKRKKQAAPEKPVKKQKTGESSKGAA. The span at 7–16 shows a compositional bias: low complexity; that stretch reads LVSSSSSASD. Positions 31–44 are enriched in basic and acidic residues; the sequence is AAPEKPVKKQKTGE. Low complexity predominate over residues 45–55; it reads SSKGAASSKQS. The tract at residues 76-100 is interaction with ssDNA; sequence FKGKVLIDIREYWMDQEGEMKPGRK.

Belongs to the transcriptional coactivator PC4 family.

The protein resides in the nucleus. In terms of biological role, general coactivator that functions cooperatively with TAFs and mediates functional interactions between upstream activators and the general transcriptional machinery. May be involved in stabilizing the multiprotein transcription complex. Binds single-stranded DNA. Also binds, in vitro, non-specifically to double-stranded DNA (ds DNA). The chain is Activated RNA polymerase II transcriptional coactivator p15 (SUB1) from Gallus gallus (Chicken).